The following is a 169-amino-acid chain: Succinate dehydrogenase cytochrome b560 subunit, mitochondrial (169 aa).

A mitochondrion-targeting transit peptide spans methionine 1 to proline 29. The Mitochondrial matrix portion of the chain corresponds to leucine 30 to methionine 65. The helical transmembrane segment at alanine 66–leucine 90 threads the bilayer. The Mitochondrial intermembrane segment spans residues leucine 91–proline 110. Residues alanine 111–leucine 139 form a helical membrane-spanning segment. A heme b-binding site is contributed by histidine 127. The Mitochondrial matrix portion of the chain corresponds to glycine 140–proline 146. Residues glutamine 147–alanine 167 form a helical membrane-spanning segment. The Mitochondrial intermembrane segment spans residues alanine 168–methionine 169.

The protein belongs to the cytochrome b560 family. As to quaternary structure, component of complex II composed of four subunits: the flavoprotein (FP) SDHA, iron-sulfur protein (IP) SDHB, and a cytochrome b560 composed of SDHC and SDHD. The cofactor is heme b.

Its subcellular location is the mitochondrion inner membrane. It functions in the pathway carbohydrate metabolism; tricarboxylic acid cycle. In terms of biological role, membrane-anchoring subunit of succinate dehydrogenase (SDH) that is involved in complex II of the mitochondrial electron transport chain and is responsible for transferring electrons from succinate to ubiquinone (coenzyme Q). SDH also oxidizes malate to the non-canonical enol form of oxaloacetate, enol-oxaloacetate. Enol-oxaloacetate, which is a potent inhibitor of the succinate dehydrogenase activity, is further isomerized into keto-oxaloacetate. This is Succinate dehydrogenase cytochrome b560 subunit, mitochondrial (SDHC) from Homo sapiens (Human).